We begin with the raw amino-acid sequence, 61 residues long: MAKKSLIAKNKRPAKFSTQAYTRCERCGRPHSVYRKFKLCRVCFRELAHKGQIPGVTKASW.

4 residues coordinate Zn(2+): C24, C27, C40, and C43.

It belongs to the universal ribosomal protein uS14 family. Zinc-binding uS14 subfamily. As to quaternary structure, part of the 30S ribosomal subunit. Contacts proteins S3 and S10. Requires Zn(2+) as cofactor.

Binds 16S rRNA, required for the assembly of 30S particles and may also be responsible for determining the conformation of the 16S rRNA at the A site. The protein is Small ribosomal subunit protein uS14 of Streptococcus thermophilus (strain CNRZ 1066).